A 417-amino-acid polypeptide reads, in one-letter code: Gamma-glutamyl phosphate reductase (417 aa).

This sequence belongs to the gamma-glutamyl phosphate reductase family.

It is found in the cytoplasm. It carries out the reaction L-glutamate 5-semialdehyde + phosphate + NADP(+) = L-glutamyl 5-phosphate + NADPH + H(+). It functions in the pathway amino-acid biosynthesis; L-proline biosynthesis; L-glutamate 5-semialdehyde from L-glutamate: step 2/2. Its function is as follows. Catalyzes the NADPH-dependent reduction of L-glutamate 5-phosphate into L-glutamate 5-semialdehyde and phosphate. The product spontaneously undergoes cyclization to form 1-pyrroline-5-carboxylate. This Legionella pneumophila (strain Lens) protein is Gamma-glutamyl phosphate reductase.